A 351-amino-acid polypeptide reads, in one-letter code: Photosystem II D2 protein (351 aa).

A helical transmembrane segment spans residues 39–59 (CAYLAVGGWLTGTTFVTSWYT). Chlorophyll a is bound at residue H116. Residues 123-139 (GFCLRQFEIARLVGLRP) traverse the membrane as a helical segment. Residues Q128 and N141 each coordinate pheophytin a. Residues 151–164 (VFVSVFLMYPLGQA) form a helical membrane-spanning segment. Residue H196 participates in chlorophyll a binding. Residues 206–226 (GALLCAIHGATVQNTLFEDGD) form a helical membrane-spanning segment. 2 residues coordinate a plastoquinone: H213 and F260. H213 is a Fe cation binding site. H267 provides a ligand contact to Fe cation. The chain crosses the membrane as a helical span at residues 277–293 (GLWTSAFGIVGLALNLR).

It belongs to the reaction center PufL/M/PsbA/D family. As to quaternary structure, PSII is composed of 1 copy each of membrane proteins PsbA, PsbB, PsbC, PsbD, PsbE, PsbF, PsbH, PsbI, PsbJ, PsbK, PsbL, PsbM, PsbT, PsbX, PsbY, PsbZ, Psb30/Ycf12, at least 3 peripheral proteins of the oxygen-evolving complex and a large number of cofactors. It forms dimeric complexes. Requires The D1/D2 heterodimer binds P680, chlorophylls that are the primary electron donor of PSII, and subsequent electron acceptors. It shares a non-heme iron and each subunit binds pheophytin, quinone, additional chlorophylls, carotenoids and lipids. There is also a Cl(-1) ion associated with D1 and D2, which is required for oxygen evolution. The PSII complex binds additional chlorophylls, carotenoids and specific lipids. as cofactor.

The protein localises to the plastid. Its subcellular location is the chloroplast thylakoid membrane. The catalysed reaction is 2 a plastoquinone + 4 hnu + 2 H2O = 2 a plastoquinol + O2. Functionally, photosystem II (PSII) is a light-driven water:plastoquinone oxidoreductase that uses light energy to abstract electrons from H(2)O, generating O(2) and a proton gradient subsequently used for ATP formation. It consists of a core antenna complex that captures photons, and an electron transfer chain that converts photonic excitation into a charge separation. The D1/D2 (PsbA/PsbD) reaction center heterodimer binds P680, the primary electron donor of PSII as well as several subsequent electron acceptors. D2 is needed for assembly of a stable PSII complex. This chain is Photosystem II D2 protein, found in Pyropia yezoensis (Susabi-nori).